Here is a 913-residue protein sequence, read N- to C-terminus: Valine--tRNA ligase (913 aa).

Residues 48–58 (PNVTGSLHMGH) carry the 'HIGH' region motif. Positions 541-545 (KMSKS) match the 'KMSKS' region motif. Lys-544 is a binding site for ATP. A coiled-coil region spans residues 839–907 (VVDLEALVSK…IEHRLQSLGV (69 aa)).

This sequence belongs to the class-I aminoacyl-tRNA synthetase family. ValS type 1 subfamily. In terms of assembly, monomer.

Its subcellular location is the cytoplasm. The enzyme catalyses tRNA(Val) + L-valine + ATP = L-valyl-tRNA(Val) + AMP + diphosphate. Functionally, catalyzes the attachment of valine to tRNA(Val). As ValRS can inadvertently accommodate and process structurally similar amino acids such as threonine, to avoid such errors, it has a 'posttransfer' editing activity that hydrolyzes mischarged Thr-tRNA(Val) in a tRNA-dependent manner. The protein is Valine--tRNA ligase of Thermosynechococcus vestitus (strain NIES-2133 / IAM M-273 / BP-1).